The following is a 122-amino-acid chain: Small ribosomal subunit protein uS13 (122 aa).

Positions 95 to 122 are disordered; it reads GLPVRGQRTHTNARTRKGPAKSIAGKKK.

This sequence belongs to the universal ribosomal protein uS13 family. In terms of assembly, part of the 30S ribosomal subunit. Forms a loose heterodimer with protein S19. Forms two bridges to the 50S subunit in the 70S ribosome.

In terms of biological role, located at the top of the head of the 30S subunit, it contacts several helices of the 16S rRNA. In the 70S ribosome it contacts the 23S rRNA (bridge B1a) and protein L5 of the 50S subunit (bridge B1b), connecting the 2 subunits; these bridges are implicated in subunit movement. Contacts the tRNAs in the A and P-sites. This Rhodopseudomonas palustris (strain BisB18) protein is Small ribosomal subunit protein uS13.